A 166-amino-acid chain; its full sequence is Phosphopantetheine adenylyltransferase (166 aa).

Residue Ser11 coordinates substrate. ATP contacts are provided by residues 11–12 (SF) and His19. Residues Lys43, Leu75, and Arg89 each coordinate substrate. ATP is bound by residues 90-92 (GLR), Glu100, and 125-131 (YGYLSSS).

This sequence belongs to the bacterial CoaD family. As to quaternary structure, homohexamer. It depends on Mg(2+) as a cofactor.

It is found in the cytoplasm. It carries out the reaction (R)-4'-phosphopantetheine + ATP + H(+) = 3'-dephospho-CoA + diphosphate. The protein operates within cofactor biosynthesis; coenzyme A biosynthesis; CoA from (R)-pantothenate: step 4/5. Reversibly transfers an adenylyl group from ATP to 4'-phosphopantetheine, yielding dephospho-CoA (dPCoA) and pyrophosphate. This chain is Phosphopantetheine adenylyltransferase, found in Syntrophotalea carbinolica (strain DSM 2380 / NBRC 103641 / GraBd1) (Pelobacter carbinolicus).